The sequence spans 1227 residues: Methionine synthase (1227 aa).

The Hcy-binding domain maps to 2 to 325; it reads SSKVEQLRAQ…EHIAAMSRAV (324 aa). Residues Cys247, Cys310, and Cys311 each coordinate Zn(2+). A Pterin-binding domain is found at 356–617; the sequence is FVNVGERTNV…LPAELRDAVE (262 aa). A B12-binding N-terminal domain is found at 650–744; sequence QQAEWRSWDV…FIEASKEKGS (95 aa). Residues Glu694, 756–760, His759, Ser804, Thr808, and Ala860 contribute to the methylcob(III)alamin site; that span reads GDVHD. In terms of domain architecture, B12-binding spans 746–881; sequence NGKMVIATVK…SDTQRDDFVA (136 aa). In terms of domain architecture, AdoMet activation spans 897–1227; it reads KKPRTPPVTL…LAPNLGYDAD (331 aa). Residues Asp946, Arg1134, and 1189–1190 contribute to the S-adenosyl-L-methionine site; that span reads YF.

It belongs to the vitamin-B12 dependent methionine synthase family. The cofactor is methylcob(III)alamin. Zn(2+) serves as cofactor.

It catalyses the reaction (6S)-5-methyl-5,6,7,8-tetrahydrofolate + L-homocysteine = (6S)-5,6,7,8-tetrahydrofolate + L-methionine. It functions in the pathway amino-acid biosynthesis; L-methionine biosynthesis via de novo pathway; L-methionine from L-homocysteine (MetH route): step 1/1. Catalyzes the transfer of a methyl group from methyl-cobalamin to homocysteine, yielding enzyme-bound cob(I)alamin and methionine. Subsequently, remethylates the cofactor using methyltetrahydrofolate. This is Methionine synthase (metH) from Salmonella typhimurium (strain LT2 / SGSC1412 / ATCC 700720).